Consider the following 428-residue polypeptide: Chaperone SurA (428 aa).

An N-terminal signal peptide occupies residues 1 to 19 (MNIWKTLLLGMLVTGSAVS). 2 consecutive PpiC domains span residues 170 to 268 (SVEY…KIED) and 277 to 377 (VTEV…EVLD).

Its subcellular location is the periplasm. The enzyme catalyses [protein]-peptidylproline (omega=180) = [protein]-peptidylproline (omega=0). In terms of biological role, chaperone involved in the correct folding and assembly of outer membrane proteins. Recognizes specific patterns of aromatic residues and the orientation of their side chains, which are found more frequently in integral outer membrane proteins. May act in both early periplasmic and late outer membrane-associated steps of protein maturation. This is Chaperone SurA from Vibrio vulnificus (strain YJ016).